A 349-amino-acid polypeptide reads, in one-letter code: Isopentenyl-diphosphate delta-isomerase (349 aa).

6 to 7 (RK) provides a ligand contact to substrate. Residues 62–64 (AMT), S93, and N122 contribute to the FMN site. A substrate-binding site is contributed by Q152. Mg(2+) is bound at residue E153. Residues K184, T214, 258 to 259 (GG), and 280 to 281 (AG) each bind FMN.

The protein belongs to the IPP isomerase type 2 family. In terms of assembly, homooctamer. Dimer of tetramers. It depends on FMN as a cofactor. The cofactor is NADPH. Mg(2+) serves as cofactor.

Its subcellular location is the cytoplasm. The catalysed reaction is isopentenyl diphosphate = dimethylallyl diphosphate. Its function is as follows. Involved in the biosynthesis of isoprenoids. Catalyzes the 1,3-allylic rearrangement of the homoallylic substrate isopentenyl (IPP) to its allylic isomer, dimethylallyl diphosphate (DMAPP). The protein is Isopentenyl-diphosphate delta-isomerase of Bacillus cereus (strain ZK / E33L).